The following is a 451-amino-acid chain: MKTTVDKLSDTRVKLTVNVPFAELDKEIDQAYAAIAQQVSIPGFRKGKAPRQLIDARFGRGPILEQVVNDMLPSRYEQAVTENDLKVIGQPEIDIAKLEDNDFVEFTAEVDIRPEFEVPDFSKISVKVPALETSEEDVDKALEDLASRFGELKDTKRKMKTGDYAIIDITTEVDGTKLDEASHEGMTYRIGDDNLIKGLDTALRGMKTDEDNEFTTTIQSGEHEGDEATVKVHVQQSKERKLPDLDDEFAQMASEFDTIDELREDTKTRVEESKKSEQAAAIRDEVLKAALEEVSFELPSSIVDEQVHAQLHQVMGQLAHDEKALAQLLEAQGTTREEFDADARKSAEESVRTQLFLDALAEIEEPEVSQQELTDHILFTAQSYGMDPNQFIQQLQSSNQLGNLFSDVRRGKALATAICRAEVTDEAGNKVDVDQYFGEIDEDEAEASEEK.

One can recognise a PPIase FKBP-type domain in the interval 162–243 (GDYAIIDITT…VQQSKERKLP (82 aa)).

It belongs to the FKBP-type PPIase family. Tig subfamily.

The protein resides in the cytoplasm. It catalyses the reaction [protein]-peptidylproline (omega=180) = [protein]-peptidylproline (omega=0). Functionally, involved in protein export. Acts as a chaperone by maintaining the newly synthesized protein in an open conformation. Functions as a peptidyl-prolyl cis-trans isomerase. This Corynebacterium aurimucosum (strain ATCC 700975 / DSM 44827 / CIP 107346 / CN-1) (Corynebacterium nigricans) protein is Trigger factor.